A 383-amino-acid polypeptide reads, in one-letter code: MGRITTDLLRRRAEHNEGCLSNLKEVALHQQDIERIELIGDACRELEILYLCNNYISRIEGLQHLKYLKYLNLAVNNITYIEGLEGCEALERLDLTLNFVADVTCVERLRANAFLDQLHLTGNPCTKVAGYRAYVVHALPQLRELDGEEVIKTERLEARQSKDDISVAVNEEALRLQKRSVSSQRWLHEALTAFPPRYNEKGERLYGHTPEERLQMLREKEEEERRKREEQRERERSSQFGAIREELERKPQRLTAEEEIAKHGRLLLRNEPKLPFTLDEEADDGEAVVLTVKVPRFLSTTLIDVQVEVNYIRVFVKEKLIQVPLSQEVAPSGVNVQRSSVNGELRIRIPYAPHVLQEVSEARRRRQRLLGLLSDDKNEDGTG.

4 LRR repeats span residues 20–45 (LSNL…ACRE), 46–66 (LEIL…QHLK), 67–89 (YLKY…GCEA), and 90–110 (LERL…ERLR). Residues 128–146 (VAGYRAYVVHALPQLRELD) form the LRRCT domain. Residues 201–244 (KGERLYGHTPEERLQMLREKEEEERRKREEQRERERSSQFGAIR) form a disordered region. Positions 211–239 (EERLQMLREKEEEERRKREEQRERERSSQ) form a coiled coil.

It belongs to the tilB family.

It is found in the cytoplasm. The protein resides in the cytoskeleton. It localises to the flagellum basal body. Its function is as follows. Involved in the regulation of the cell cycle; is required for the basal body replication and new flagellum biogenesis. The polypeptide is Dynein axonemal assembly factor 11 (dnaaf11) (Trypanosoma brucei brucei).